The sequence spans 151 residues: Cytochrome c oxidase subunit 5B, mitochondrial (151 aa).

A mitochondrion-targeting transit peptide spans 1-17 (MLRTSLTKGARLTGTRF). Residues 18 to 85 (VQTKALSKAT…EWGPRRPVHG (68 aa)) lie on the Mitochondrial matrix side of the membrane. A helical membrane pass occupies residues 86-108 (KGDVAFITKGVFLGLGISFGLFG). Residues 109–151 (LVRLLANPETPKTMNREWQLKSDEYLKSKNANPWGGYSQVQSK) lie on the Mitochondrial intermembrane side of the membrane.

Belongs to the cytochrome c oxidase IV family. As to quaternary structure, component of the cytochrome c oxidase (complex IV, CIV), a multisubunit enzyme composed of 12 subunits. The complex is composed of a catalytic core of 3 subunits COX1, COX2 and COX3, encoded in the mitochondrial DNA, and 9 supernumerary subunits COX4, COX5A (or COX5B), COX6, COX7, COX8, COX9, COX12, COX13 and COX26, which are encoded in the nuclear genome. COX5A is the predominant subunit V during aerobic/normoxic growth, it gets replaced by COX5B under anaerobic/hypoxic conditions. The complex exists as a monomer or a dimer and forms supercomplexes (SCs) in the inner mitochondrial membrane with a dimer of ubiquinol-cytochrome c oxidoreductase (cytochrome b-c1 complex, complex III, CIII), resulting in 2 different assemblies (supercomplexes III(2)IV and III(2)IV(2)).

The protein resides in the mitochondrion inner membrane. It participates in energy metabolism; oxidative phosphorylation. Component of the cytochrome c oxidase, the last enzyme in the mitochondrial electron transport chain which drives oxidative phosphorylation. The respiratory chain contains 3 multisubunit complexes succinate dehydrogenase (complex II, CII), ubiquinol-cytochrome c oxidoreductase (cytochrome b-c1 complex, complex III, CIII) and cytochrome c oxidase (complex IV, CIV), that cooperate to transfer electrons derived from NADH and succinate to molecular oxygen, creating an electrochemical gradient over the inner membrane that drives transmembrane transport and the ATP synthase. Cytochrome c oxidase is the component of the respiratory chain that catalyzes the reduction of oxygen to water. Electrons originating from reduced cytochrome c in the intermembrane space (IMS) are transferred via the dinuclear copper A center (CU(A)) of COX2 and heme A of COX1 to the active site in COX1, a binuclear center (BNC) formed by heme A3 and copper B (CU(B)). The BNC reduces molecular oxygen to 2 water molecules using 4 electrons from cytochrome c in the IMS and 4 protons from the mitochondrial matrix. The chain is Cytochrome c oxidase subunit 5B, mitochondrial (COX5B) from Saccharomyces cerevisiae (strain ATCC 204508 / S288c) (Baker's yeast).